The following is a 115-amino-acid chain: T cell receptor beta variable 7-6 (115 aa).

A signal peptide spans 1–21 (MGTSLLCWVVLGFLGTDHTGA). An Ig-like domain is found at 22–115 (GVSQSPRYKV…SAMYRCASSL (94 aa)). A disulfide bridge links Cys42 with Cys111.

Alpha-beta TR is a heterodimer composed of an alpha and beta chain; disulfide-linked. The alpha-beta TR is associated with the transmembrane signaling CD3 coreceptor proteins to form the TR-CD3 (TcR or TCR). The assembly of alpha-beta TR heterodimers with CD3 occurs in the endoplasmic reticulum where a single alpha-beta TR heterodimer associates with one CD3D-CD3E heterodimer, one CD3G-CD3E heterodimer and one CD247 homodimer forming a stable octameric structure. CD3D-CD3E and CD3G-CD3E heterodimers preferentially associate with TR alpha and TR beta chains, respectively. The association of the CD247 homodimer is the last step of TcR assembly in the endoplasmic reticulum and is required for transport to the cell surface.

It localises to the cell membrane. V region of the variable domain of T cell receptor (TR) beta chain that participates in the antigen recognition. Alpha-beta T cell receptors are antigen specific receptors which are essential to the immune response and are present on the cell surface of T lymphocytes. Recognize peptide-major histocompatibility (MH) (pMH) complexes that are displayed by antigen presenting cells (APC), a prerequisite for efficient T cell adaptive immunity against pathogens. Binding of alpha-beta TR to pMH complex initiates TR-CD3 clustering on the cell surface and intracellular activation of LCK that phosphorylates the ITAM motifs of CD3G, CD3D, CD3E and CD247 enabling the recruitment of ZAP70. In turn ZAP70 phosphorylates LAT, which recruits numerous signaling molecules to form the LAT signalosome. The LAT signalosome propagates signal branching to three major signaling pathways, the calcium, the mitogen-activated protein kinase (MAPK) kinase and the nuclear factor NF-kappa-B (NF-kB) pathways, leading to the mobilization of transcription factors that are critical for gene expression and essential for T cell growth and differentiation. The T cell repertoire is generated in the thymus, by V-(D)-J rearrangement. This repertoire is then shaped by intrathymic selection events to generate a peripheral T cell pool of self-MH restricted, non-autoaggressive T cells. Post-thymic interaction of alpha-beta TR with the pMH complexes shapes TR structural and functional avidity. The sequence is that of T cell receptor beta variable 7-6 from Homo sapiens (Human).